Consider the following 212-residue polypeptide: Phosphoribosyl-dephospho-CoA transferase (212 aa).

Residues D139 and D141 contribute to the active site.

This sequence belongs to the MdcG family.

The catalysed reaction is apo-[malonate decarboxylase ACP] + 2'-(5''-triphospho-alpha-D-ribosyl)-3'-dephospho-CoA = holo-[malonate decarboxylase ACP] + diphosphate. In terms of biological role, transfers 2'-(5-triphosphoribosyl)-3'-dephosphocoenzyme-A to the apo-[acyl-carrier-protein] of the malonate decarboxylase to yield holo-[acyl-carrier-protein]. In Azotobacter vinelandii (strain DJ / ATCC BAA-1303), this protein is Phosphoribosyl-dephospho-CoA transferase.